Reading from the N-terminus, the 786-residue chain is E3 ubiquitin-protein ligase pub3 (786 aa).

A C2 domain is found at 1-109 (MEQGAKRVRF…RSNREVSLTR (109 aa)). Disordered stretches follow at residues 134 to 225 (IRAP…NSNA) and 263 to 306 (TWTR…DSGN). The segment covering 142 to 193 (SSTTANRTTSTPTTTTARTTRTTPRPTATTNTSNQSTSNSTRNGTSAATSNG) has biased composition (low complexity). The span at 204 to 213 (HRSSPVTNRQ) shows a compositional bias: polar residues. Low complexity predominate over residues 214-225 (TNNTSALSNSNA). The 34-residue stretch at 236–269 (GRLPPGWERRADSLGRTYYVDHNTRTTTWTRPAS) folds into the WW 1 domain. Composition is skewed to polar residues over residues 263-285 (TWTRPASSTNPVHNTSSDSQRLN) and 295-305 (SNPSLMQSDSG). WW domains follow at residues 306–339 (NDLPFGWEMRYTDTGRPYFVDHNTRTTTWVDPRN) and 364–397 (GPLPSGWEMRLTNSARVYFVDHNTKTTTWDDPRL). Residues 453-786 (SAHDLKKRLM…VENTVGFGNE (334 aa)) enclose the HECT domain. Residue cysteine 754 is the Glycyl thioester intermediate of the active site.

The catalysed reaction is S-ubiquitinyl-[E2 ubiquitin-conjugating enzyme]-L-cysteine + [acceptor protein]-L-lysine = [E2 ubiquitin-conjugating enzyme]-L-cysteine + N(6)-ubiquitinyl-[acceptor protein]-L-lysine.. The protein operates within protein modification; protein ubiquitination. In terms of biological role, E3 ubiquitin-protein ligase which accepts ubiquitin from an E2 ubiquitin-conjugating enzyme in the form of a thioester and then directly transfers the ubiquitin to targeted substrates. This chain is E3 ubiquitin-protein ligase pub3 (pub3), found in Schizosaccharomyces pombe (strain 972 / ATCC 24843) (Fission yeast).